A 376-amino-acid chain; its full sequence is uncharacterized protein (376 aa).

Residues 1–31 form the signal peptide; it reads MSRHKVYKAISSYVIIAIIIIAIVAVVGVLL. Residues 37–57 form a disordered region; that stretch reads SSSSVTSTTTPTTSSSVSPSS.

Belongs to the bacterial solute-binding protein 1 family. WtpA subfamily.

This is an uncharacterized protein from Sulfurisphaera tokodaii (strain DSM 16993 / JCM 10545 / NBRC 100140 / 7) (Sulfolobus tokodaii).